The sequence spans 140 residues: Nucleoside diphosphate kinase (140 aa).

ATP contacts are provided by K11, F59, R87, T93, R104, and N114. Residue H117 is the Pros-phosphohistidine intermediate of the active site.

Belongs to the NDK family. Homotetramer. Mg(2+) is required as a cofactor.

Its subcellular location is the cytoplasm. It carries out the reaction a 2'-deoxyribonucleoside 5'-diphosphate + ATP = a 2'-deoxyribonucleoside 5'-triphosphate + ADP. It catalyses the reaction a ribonucleoside 5'-diphosphate + ATP = a ribonucleoside 5'-triphosphate + ADP. Major role in the synthesis of nucleoside triphosphates other than ATP. The ATP gamma phosphate is transferred to the NDP beta phosphate via a ping-pong mechanism, using a phosphorylated active-site intermediate. In Hyphomonas neptunium (strain ATCC 15444), this protein is Nucleoside diphosphate kinase.